Reading from the N-terminus, the 214-residue chain is Ribosomal RNA small subunit methyltransferase G (214 aa).

Residues glycine 81, methionine 86, valine 132–glutamate 133, and arginine 147 each bind S-adenosyl-L-methionine.

Belongs to the methyltransferase superfamily. RNA methyltransferase RsmG family.

It localises to the cytoplasm. The enzyme catalyses guanosine(527) in 16S rRNA + S-adenosyl-L-methionine = N(7)-methylguanosine(527) in 16S rRNA + S-adenosyl-L-homocysteine. Its function is as follows. Specifically methylates the N7 position of guanine in position 527 of 16S rRNA. The polypeptide is Ribosomal RNA small subunit methyltransferase G (Ectopseudomonas mendocina (strain ymp) (Pseudomonas mendocina)).